The chain runs to 799 residues: MARTAPVEPPLRHPAPPSPAAGEPRASAEAAVAPRRVLFADEALGLPLAQLRRYRPWGGPGAGKMAAATGQDGGGGGADEEDDGEDGDEGEEEEEAFPDPSPPCPVPAGGGFYLVPTFSLPPALGRLERLGRVMVELEALLPPPGAVPGGSGVWVPGGRPPVVRGLVRVLNRSFEKAVHVRASHDGWATFCDHPARYVPRSPPGAGVGGTGAGDPLLDPGLGLGPGQMSASSPDDGGCTDRFAFQLPFAEGASDGARLDFVVRYETPEGTFWANNHGRNYTVLLRIAPAPTPTDAEGLPQQQQLQQLEPQPECQGPVEAEARQLKSCMKPVRRRPFEEEPRMRSADDNTLAEHPDVRESLGPLLAPTPLRPWPQMTLQVPEVMLTSNPQEEGDIPRSNPPVAFTEVRQAPAIRILPATCGLGGPPRDQASGPDASDRAAGSFLEPTQQQVEAAWESGGGRKAPMVGALTDEPARGLEIVSGLDELLGEDTIDQELEQLYLSHLSRLRAVAAAGGGEGTSPTHALGILTDRDLILKWPGPERALNSALAEEITLHYARLGCGVELIKDTEDPDDEGEGEDGLSITPSSPEGGSPKESPPEILSGARSVIATMGDVWVPWAERSSSRCDSPVVLGTQGQFTENPEKGMGKDTKSLHLNRVIVGMSKSPGEAGTESQMEELPTERESSWVPSSEKELPLPVQQEQSPALLGPTGTEVCLSSVAKPHVNSQEEEGGSLNLESPKRSPMPAAPAECACGLAPQLWGPLTQTLGVLAGLVMVPVALNSGVSLLVLVLCLSLAWFS.

A disordered region spans residues 1 to 30; it reads MARTAPVEPPLRHPAPPSPAAGEPRASAEA. Residues 1–772 lie on the Cytoplasmic side of the membrane; the sequence is MARTAPVEPP…LTQTLGVLAG (772 aa). The segment covering 7–19 has biased composition (pro residues); the sequence is VEPPLRHPAPPSP. The residue at position 18 (serine 18) is a Phosphoserine. The segment covering 20–30 has biased composition (low complexity); the sequence is AAGEPRASAEA. The short motif at 36–39 is the PP1-binding motif element; it reads RVLF. Disordered stretches follow at residues 53–108, 201–235, 332–353, and 417–439; these read RYRP…PVPA, SPPG…SPDD, RRRP…LAEH, and ATCG…DRAA. Acidic residues predominate over residues 78–97; that stretch reads ADEEDDGEDGDEGEEEEEAF. The CBM21 domain maps to 127–283; the sequence is LERLGRVMVE…NNHGRNYTVL (157 aa). Residues 334 to 353 show a composition bias toward basic and acidic residues; the sequence is RPFEEEPRMRSADDNTLAEH. The residue at position 545 (serine 545) is a Phosphoserine. 3 disordered regions span residues 566 to 600, 663 to 688, and 722 to 743; these read KDTE…PPEI, SKSP…SWVP, and PHVN…KRSP. Acidic residues predominate over residues 569-579; that stretch reads EDPDDEGEGED. The segment covering 585-594 has biased composition (low complexity); that stretch reads PSSPEGGSPK. Residues serine 587 and serine 592 each carry the phosphoserine modification. Residues 679 to 688 are compositionally biased toward basic and acidic residues; it reads PTERESSWVP. Residues 773–793 traverse the membrane as a helical segment; sequence LVMVPVALNSGVSLLVLVLCL. The Extracellular portion of the chain corresponds to 794–799; that stretch reads SLAWFS.

In terms of tissue distribution, highly expressed in brain (at protein level).

The protein localises to the membrane. Its function is as follows. Glycogen-targeting subunit for protein phosphatase 1 (PP1). In Mus musculus (Mouse), this protein is Protein phosphatase 1 regulatory subunit 3F (Ppp1r3f).